A 117-amino-acid chain; its full sequence is UPF0145 protein PH1682 (117 aa).

It belongs to the UPF0145 family.

The polypeptide is UPF0145 protein PH1682 (Pyrococcus horikoshii (strain ATCC 700860 / DSM 12428 / JCM 9974 / NBRC 100139 / OT-3)).